A 179-amino-acid polypeptide reads, in one-letter code: Large ribosomal subunit protein uL5 (179 aa).

This sequence belongs to the universal ribosomal protein uL5 family. As to quaternary structure, part of the 50S ribosomal subunit; part of the 5S rRNA/L5/L18/L25 subcomplex. Contacts the 5S rRNA and the P site tRNA. Forms a bridge to the 30S subunit in the 70S ribosome.

This is one of the proteins that bind and probably mediate the attachment of the 5S RNA into the large ribosomal subunit, where it forms part of the central protuberance. In the 70S ribosome it contacts protein S13 of the 30S subunit (bridge B1b), connecting the 2 subunits; this bridge is implicated in subunit movement. Contacts the P site tRNA; the 5S rRNA and some of its associated proteins might help stabilize positioning of ribosome-bound tRNAs. This is Large ribosomal subunit protein uL5 from Prochlorococcus marinus (strain MIT 9211).